The primary structure comprises 276 residues: Undecaprenyl-diphosphatase 2 (276 aa).

The next 7 helical transmembrane spans lie at 3–23, 48–68, 92–112, 119–139, 196–216, 225–245, and 255–275; these read IWDI…EYAP, AANT…AFVF, LSIA…FLFE, LFSV…MLAA, ADFT…LSLI, DLLP…LFVV, and IKLV…FILF.

The protein belongs to the UppP family.

The protein resides in the cell membrane. It carries out the reaction di-trans,octa-cis-undecaprenyl diphosphate + H2O = di-trans,octa-cis-undecaprenyl phosphate + phosphate + H(+). In terms of biological role, catalyzes the dephosphorylation of undecaprenyl diphosphate (UPP). Confers resistance to bacitracin. In Bacillus licheniformis (strain ATCC 14580 / DSM 13 / JCM 2505 / CCUG 7422 / NBRC 12200 / NCIMB 9375 / NCTC 10341 / NRRL NRS-1264 / Gibson 46), this protein is Undecaprenyl-diphosphatase 2.